Here is a 367-residue protein sequence, read N- to C-terminus: Glutamate 5-kinase (367 aa).

Lys-10 provides a ligand contact to ATP. Residues Ser-50, Asp-137, and Asn-149 each contribute to the substrate site. Residues 169–170 and 211–217 each bind ATP; these read TD and TGGMATK. The 79-residue stretch at 275–353 folds into the PUA domain; sequence AGEITVDDGA…QQISEILGYE (79 aa).

The protein belongs to the glutamate 5-kinase family.

The protein resides in the cytoplasm. The catalysed reaction is L-glutamate + ATP = L-glutamyl 5-phosphate + ADP. The protein operates within amino-acid biosynthesis; L-proline biosynthesis; L-glutamate 5-semialdehyde from L-glutamate: step 1/2. In terms of biological role, catalyzes the transfer of a phosphate group to glutamate to form L-glutamate 5-phosphate. In Yersinia pseudotuberculosis serotype IB (strain PB1/+), this protein is Glutamate 5-kinase.